Reading from the N-terminus, the 350-residue chain is S-adenosylmethionine:tRNA ribosyltransferase-isomerase (350 aa).

This sequence belongs to the QueA family. Monomer.

It localises to the cytoplasm. The enzyme catalyses 7-aminomethyl-7-carbaguanosine(34) in tRNA + S-adenosyl-L-methionine = epoxyqueuosine(34) in tRNA + adenine + L-methionine + 2 H(+). It functions in the pathway tRNA modification; tRNA-queuosine biosynthesis. In terms of biological role, transfers and isomerizes the ribose moiety from AdoMet to the 7-aminomethyl group of 7-deazaguanine (preQ1-tRNA) to give epoxyqueuosine (oQ-tRNA). The sequence is that of S-adenosylmethionine:tRNA ribosyltransferase-isomerase from Saccharophagus degradans (strain 2-40 / ATCC 43961 / DSM 17024).